The following is a 101-amino-acid chain: Small ribosomal subunit protein uS14 (101 aa).

A disordered region spans residues 32–62; the sequence is GDAKRSDAEREAARLGLQKLPRNANPTRQRN. Residues 33 to 44 are compositionally biased toward basic and acidic residues; it reads DAKRSDAEREAA.

It belongs to the universal ribosomal protein uS14 family. As to quaternary structure, part of the 30S ribosomal subunit. Contacts proteins S3 and S10.

Functionally, binds 16S rRNA, required for the assembly of 30S particles and may also be responsible for determining the conformation of the 16S rRNA at the A site. The chain is Small ribosomal subunit protein uS14 from Verminephrobacter eiseniae (strain EF01-2).